We begin with the raw amino-acid sequence, 291 residues long: Transmembrane protein 41B (291 aa).

Positions methionine 1 to glutamine 11 are enriched in basic and acidic residues. The disordered stretch occupies residues methionine 1 to histidine 38. The residue at position 18 (threonine 18) is a Phosphothreonine. 6 helical membrane passes run threonine 52 to tyrosine 72, phenylalanine 109 to isoleucine 129, leucine 147 to leucine 169, leucine 197 to isoleucine 217, proline 225 to isoleucine 245, and serine 262 to phenylalanine 282. The VTT domain; required for its function in autophagy stretch occupies residues glycine 140–leucine 251.

It belongs to the TMEM41 family. In terms of assembly, interacts with VMP1. Interacts with COPA, COPB1, VDAC1 and ERLIN2. Interacts with ATG2A. Interacts with SURF4.

The protein resides in the endoplasmic reticulum membrane. It is found in the endomembrane system. It catalyses the reaction a 1,2-diacyl-sn-glycero-3-phospho-L-serine(in) = a 1,2-diacyl-sn-glycero-3-phospho-L-serine(out). The enzyme catalyses cholesterol(in) = cholesterol(out). The catalysed reaction is a 1,2-diacyl-sn-glycero-3-phosphocholine(in) = a 1,2-diacyl-sn-glycero-3-phosphocholine(out). It carries out the reaction a 1,2-diacyl-sn-glycero-3-phosphoethanolamine(in) = a 1,2-diacyl-sn-glycero-3-phosphoethanolamine(out). Phospholipid scramblase involved in lipid homeostasis and membrane dynamics processes. Has phospholipid scramblase activity toward cholesterol and phosphatidylserine, as well as phosphatidylethanolamine and phosphatidylcholine. Required for autophagosome formation: participates in early stages of autophagosome biogenesis at the endoplasmic reticulum (ER) membrane by reequilibrating the leaflets of the ER as lipids are extracted by ATG2 (ATG2A or ATG2B) to mediate autophagosome assembly. In addition to autophagy, involved in other processes in which phospholipid scramblase activity is required. Required for normal motor neuron development. The chain is Transmembrane protein 41B from Rattus norvegicus (Rat).